The sequence spans 1042 residues: Carbamoyl phosphate synthase large chain (1042 aa).

A carboxyphosphate synthetic domain region spans residues 1–417 (MTEDSRTILL…SLLKALRSSE (417 aa)). ATP-binding residues include R127, R182, G188, G189, E221, I223, E228, G254, I255, H256, Q297, and E314. In terms of domain architecture, ATP-grasp 1 spans 131–343 (RQRMADLGQP…IARVTAKVAL (213 aa)). Q297, E314, and N316 together coordinate Mg(2+). Q297, E314, and N316 together coordinate Mn(2+). The tract at residues 418-558 (YDPSVDWATV…SQGSTGSDVR (141 aa)) is oligomerization domain. The interval 559 to 947 (ADRDAHSVVI…WKAQVAASNA (389 aa)) is carbamoyl phosphate synthetic domain. Positions 689-880 (NRLLDERDIS…IAKLAAKVMA (192 aa)) constitute an ATP-grasp 2 domain. R725, E764, L766, E771, G796, V797, H798, S799, Q839, and E851 together coordinate ATP. The Mg(2+) site is built by Q839, E851, and N853. Positions 839, 851, and 853 each coordinate Mn(2+). An MGS-like domain is found at 947–1042 (APVPGSTAVV…DRPVNDETWG (96 aa)). Residues 948 to 1042 (PVPGSTAVVD…DRPVNDETWG (95 aa)) form an allosteric domain region.

This sequence belongs to the CarB family. In terms of assembly, composed of two chains; the small (or glutamine) chain promotes the hydrolysis of glutamine to ammonia, which is used by the large (or ammonia) chain to synthesize carbamoyl phosphate. Tetramer of heterodimers (alpha,beta)4. Requires Mg(2+) as cofactor. The cofactor is Mn(2+).

The enzyme catalyses hydrogencarbonate + L-glutamine + 2 ATP + H2O = carbamoyl phosphate + L-glutamate + 2 ADP + phosphate + 2 H(+). It carries out the reaction hydrogencarbonate + NH4(+) + 2 ATP = carbamoyl phosphate + 2 ADP + phosphate + 2 H(+). It functions in the pathway amino-acid biosynthesis; L-arginine biosynthesis; carbamoyl phosphate from bicarbonate: step 1/1. Its pathway is pyrimidine metabolism; UMP biosynthesis via de novo pathway; (S)-dihydroorotate from bicarbonate: step 1/3. Functionally, large subunit of the glutamine-dependent carbamoyl phosphate synthetase (CPSase). CPSase catalyzes the formation of carbamoyl phosphate from the ammonia moiety of glutamine, carbonate, and phosphate donated by ATP, constituting the first step of 2 biosynthetic pathways, one leading to arginine and/or urea and the other to pyrimidine nucleotides. The large subunit (synthetase) binds the substrates ammonia (free or transferred from glutamine from the small subunit), hydrogencarbonate and ATP and carries out an ATP-coupled ligase reaction, activating hydrogencarbonate by forming carboxy phosphate which reacts with ammonia to form carbamoyl phosphate. This is Carbamoyl phosphate synthase large chain from Halobacterium salinarum (strain ATCC 700922 / JCM 11081 / NRC-1) (Halobacterium halobium).